The chain runs to 440 residues: 3-phosphoshikimate 1-carboxyvinyltransferase (440 aa).

3-phosphoshikimate-binding residues include lysine 26, serine 27, and arginine 31. Residue lysine 26 participates in phosphoenolpyruvate binding. 2 residues coordinate phosphoenolpyruvate: glycine 99 and arginine 127. Serine 172, glutamine 174, aspartate 320, and lysine 347 together coordinate 3-phosphoshikimate. Residue glutamine 174 participates in phosphoenolpyruvate binding. The Proton acceptor role is filled by aspartate 320. 2 residues coordinate phosphoenolpyruvate: arginine 351 and arginine 392.

It belongs to the EPSP synthase family. As to quaternary structure, monomer.

The protein resides in the cytoplasm. It catalyses the reaction 3-phosphoshikimate + phosphoenolpyruvate = 5-O-(1-carboxyvinyl)-3-phosphoshikimate + phosphate. The protein operates within metabolic intermediate biosynthesis; chorismate biosynthesis; chorismate from D-erythrose 4-phosphate and phosphoenolpyruvate: step 6/7. Functionally, catalyzes the transfer of the enolpyruvyl moiety of phosphoenolpyruvate (PEP) to the 5-hydroxyl of shikimate-3-phosphate (S3P) to produce enolpyruvyl shikimate-3-phosphate and inorganic phosphate. In Xanthomonas euvesicatoria pv. vesicatoria (strain 85-10) (Xanthomonas campestris pv. vesicatoria), this protein is 3-phosphoshikimate 1-carboxyvinyltransferase.